The chain runs to 178 residues: Extracellular fatty acid-binding protein (178 aa).

The signal sequence occupies residues 1 to 20 (MRTLALSLGLALLCLLHAKA). An enterobactin-binding site is contributed by threonine 43. Residues tyrosine 72 and lysine 104 each coordinate 1-tetradecanoyl-sn-glycerol 3-phosphate. Cysteine 80 and cysteine 173 are oxidised to a cystine. Enterobactin contacts are provided by lysine 104, arginine 123, and arginine 134. 1-tetradecanoyl-sn-glycerol 3-phosphate is bound at residue 134 to 136 (RLY).

It belongs to the calycin superfamily. Lipocalin family. As to quaternary structure, monomer.

It localises to the secreted. Functionally, siderocalin-like lipocalin tightly binding a variety of bacterial ferric siderophores, also binds long-chain unsaturated fatty acids such as linoleic acid, oleic acid, arachidonic acid and, with a lower affinity, long chain saturated fatty acids such as steraic acid. May act as an antibacterial factor, through dual ligand specificity, both as a siderophore-sequestrating molecule and a lysophosphatidic acid (LPA) sensor. The sequence is that of Extracellular fatty acid-binding protein from Coturnix japonica (Japanese quail).